Consider the following 404-residue polypeptide: Probable eukaryotic initiation factor 4A (404 aa).

Residues 1–28 (MAQQGKVEPQDQDSFLDDQPGIRPIPSF) are disordered. Positions 26–54 (PSFDDMPLHQNLLRGIYSHGFEKPSSIQQ) match the Q motif motif. The Helicase ATP-binding domain maps to 57–231 (IVPFTRGGDI…KKFMRDPTRI (175 aa)). 70–77 (AQSGTGKT) is an ATP binding site. The short motif at 179-182 (DEAD) is the DEAD box element. The Helicase C-terminal domain occupies 242 to 402 (GIKQFFIAVE…ELPVDFAAYL (161 aa)).

It belongs to the DEAD box helicase family. eIF4A subfamily. As to quaternary structure, eIF4F is a multi-subunit complex, the composition of which varies with external and internal environmental conditions. It is composed of at least EIF4A, EIF4E and EIF4G.

The catalysed reaction is ATP + H2O = ADP + phosphate + H(+). In terms of biological role, ATP-dependent RNA helicase which is a subunit of the eIF4F complex involved in cap recognition and is required for mRNA binding to ribosome. In the current model of translation initiation, eIF4A unwinds RNA secondary structures in the 5'-UTR of mRNAs which is necessary to allow efficient binding of the small ribosomal subunit, and subsequent scanning for the initiator codon. This is Probable eukaryotic initiation factor 4A from Trypanosoma brucei brucei (strain 927/4 GUTat10.1).